A 431-amino-acid polypeptide reads, in one-letter code: Enolase (431 aa).

Gln-162 lines the (2R)-2-phosphoglycerate pocket. Glu-204 (proton donor) is an active-site residue. Mg(2+)-binding residues include Asp-241, Glu-288, and Asp-315. Positions 340, 369, 370, and 391 each coordinate (2R)-2-phosphoglycerate. Lys-340 serves as the catalytic Proton acceptor.

The protein belongs to the enolase family. Mg(2+) is required as a cofactor.

The protein resides in the cytoplasm. It localises to the secreted. It is found in the cell surface. The enzyme catalyses (2R)-2-phosphoglycerate = phosphoenolpyruvate + H2O. It functions in the pathway carbohydrate degradation; glycolysis; pyruvate from D-glyceraldehyde 3-phosphate: step 4/5. Functionally, catalyzes the reversible conversion of 2-phosphoglycerate (2-PG) into phosphoenolpyruvate (PEP). It is essential for the degradation of carbohydrates via glycolysis. The protein is Enolase of Phocaeicola vulgatus (strain ATCC 8482 / DSM 1447 / JCM 5826 / CCUG 4940 / NBRC 14291 / NCTC 11154) (Bacteroides vulgatus).